Reading from the N-terminus, the 2845-residue chain is MAAASYDQLLKQVEALKMENSNLRQELEDNSNHLTKLETEASNMKEVLKQLQGSIEDETMTSGQIDLLERLKEFNLDSNFPGVKLRSKMSLRSYGSREGSVSSRSGECSPVPMGSFPRRTFVNGSRESTGYLEELEKERSLLLADLDKEEKEKDWYYAQLQNLTKRIDSLPLTENFSLQTDMTRRQLEYEARQIRAAMEEQLGTCQDMEKRAQRRIARIQQIEKDILRVRQLLQSQAAEAERSSQSRHDAASHEAGRQHEGHGVAESNTAASSSGQSPATRVDHETASVLSSSGTHSAPRRLTSHLGTKVEMVYSLLSMLGTHDKDDMSRTLLAMSSSQDSCISMRQSGCLPLLIQLLHGNDKDSVLLGNSRGSKEARARASAALHNIIHSQPDDKRGRREIRVLHLLEQIRAYCETCWEWQEAHEQGMDQDKNPMPAPVEHQICPAVCVLMKLSFDEEHRHAMNELGGLQAIAELLQVDCEMYGLTNDHYSVTLRRYAGMALTNLTFGDVANKATLCSMKGCMRALVAQLKSESEDLQQVIASVLRNLSWRADVNSKKTLREVGSVKALMECALEVKKESTLKSVLSALWNLSAHCTENKADICAVDGALAFLVGTLTYRSQTNTLAIIESGGGILRNVSSLIATNEDHRQILRENNCLQTLLQHLKSHSLTIVSNACGTLWNLSARNPKDQEALWDMGAVSMLKNLIHSKHKMIAMGSAAALRNLMANRPAKYKDANIMSPGSSLPSLHVRKQKALEAELDAQHLSETFDNIDNLSPKASHRSKQRHKQNLYGDYAFDANRHDDSRSDNFNTGNMTVLSPYLNTTVLPSSSSSRGSLDSSRSEKDRSLERERGIGLSAYHPTTENAGTSSKRGLQITTTAAQIAKVMEEVSAIHTSQDDRSSASTTEFHCVADDRSAARRSSASHTHSNTYNFTKSENSNRTCSMPYAKVEYKRSSNDSLNSVTSSDGYGKRGQMKPSVESYSEDDESKFCSYGQYPADLAHKIHSANHMDDNDGELDTPINYSLKYSDEQLNSGRQSPSQNERWARPKHVIEDEIKQNEQRQARSQNTSYPVYSENTDDKHLKFQPHFGQQECVSPYRSRGTSGSETNRMGSSHAINQNVNQSLCQEDDYEDDKPTNYSERYSEEEQHEEEEERPTNYSIKYNEEKHHVDQPIDYSLKYATDISSSQKPSFSFSKNSSAQSTKPEHLSPSSENTAVPPSNAKRQNQLRPSSAQRNGQTQKGTTCKVPSINQETIQTYCVEDTPICFSRCSSLSSLSSADDEIGCDQTTQEADSANTLQTAEVKENDVTRSAEDPATEVPAVSQNARAKPSRLQASGLSSESTRHNKAVEFSSGAKSPSKSGAQTPKSPPEHYVQETPLVFSRCTSVSSLDSFESRSIASSVQSEPCSGMVSGIISPSDLPDSPGQTMPPSRSKTPPPPPQTVQAKREVPKSKVPAAEKRESGPKQTAVNAAVQRVQVLPDVDTLLHFATESTPDGFSCSSSLSALSLDEPFIQKDVELRIMPPVQENDNGNETESEQPEESNENQDKEVEKPDSEKDLLDDSDDDDIEILEECIISAMPTKSSRKAKKLAQTASKLPPPVARKPSQLPVYKLLPAQNRLQAQKHVSFTPGDDVPRVYCVEGTPINFSTATSLSDLTIESPPNELATGDGVRAGIQSGEFEKRDTIPTEGRSTDDAQRGKISSIVTPDLDDNKAEEGDILAECINSAMPKGKSHKPFRVKKIMDQVQQASSTSSGANKNQVDTKKKKPTSPVKPMPQNTEYRTRVRKNTDSKVNVNTEETFSDNKDSKKPSLQTNAKAFNEKLPNNEDRVRGTFALDSPHHYTPIEGTPYCFSRNDSLSSLDFDDDDVDLSREKAELRKGKESKDSEAKVTCRPEPNSSQQAASKSQASIKHPANRAQSKPVLQKQPTFPQSSKDGPDRGAATDEKLQNLAIENTPVCFSRNSSLSSLSDIDQENNNNKESEPIKEAEPANSQGEPSKPQASGYAPKSFHVEDTPVCFSRNSSLSSLSIDSEDDLLQECISSAMPKKKRPSRLKSESEKQSPRKVGGILAEDLTLDLKDLQRPDSEHAFSPGSENFDWKAIQEGANSIVSSLHQAAAAAACLSRQASSDSDSILSLKSGISLGSPFHLTPDQEEKPFTSNKGPRILKPGEKSTLEAKKIESENKGIKGGKKVYKSLITGKIRSNSEISSQMKQPLPTNMPSISRGRTMIHIPGLRNSSSSTSPVSKKGPPLKTPASKSPSEGPGATTSPRGTKPAGKSELSPITRQTSQISGSNKGSSRSGSRDSTPSRPTQQPLSRPMQSPGRNSISPGRNGISPPNKLSQLPRTSSPSTASTKSSGSGKMSYTSPGRQLSQQNLTKQASLSKNASSIPRSESASKGLNQMSNGNGSNKKVELSRMSSTKSSGSESDSSERPALVRQSTFIKEAPSPTLRRKLEESASFESLSPSSRPDSPTRSQAQTPVLSPSLPDMSLSTHPSVQAGGWRKLPPNLSPTIEYNDGRPTKRHDIARSHSESPSRLPINRAGTWKREHSKHSSSLPRVSTWRRTGSSSSILSASSESSEKAKSEDERHVSSMPAPRQMKENQVPTKGTWRKIKESDISPTGMASQSASSGAASGAESKPLIYQMAPPVSKTEDVWVRIEDCPINNPRSGRSPTGNTPPVIDSVSEKGSSSIKDSKDSKDTHGKQSVGSGSPVQTVGLETRLNSFVQVEAPEQKGTEAKPGQSNPVSIAETAETCIAERTPFSSSSSSKHSSPSGTVAARVTPFNYNPSPRKSSADSTSARPSQIPTPVSTNTKKRDSKTDITESSGAQSPKRHSGSYLVTSV.

Ala2 bears the N-acetylalanine mark. Residues 2–61 adopt a coiled-coil conformation; the sequence is AAASYDQLLKQVEALKMENSNLRQELEDNSNHLTKLETEASNMKEVLKQLQGSIEDETMT. A phosphoserine mark is found at Ser105 and Ser109. A coiled-coil region spans residues 125-245; that stretch reads SRESTGYLEE…QAAEAERSSQ (121 aa). The disordered stretch occupies residues 238–304; it reads AEAERSSQSR…THSAPRRLTS (67 aa). The span at 239–263 shows a compositional bias: basic and acidic residues; that stretch reads EAERSSQSRHDAASHEAGRQHEGHG. A compositionally biased stretch (polar residues) spans 266 to 279; the sequence is ESNTAASSSGQSPA. ARM repeat units follow at residues 451–493, 503–545, 546–589, 590–636, 637–681, 682–723, and 724–765; these read LMKL…HYSV, LTNL…IASV, LRNL…VLSA, LWNL…GGGI, LRNV…ACGT, LWNL…SAAA, and LRNL…LDAQ. A phosphoserine mark is found at Ser742, Ser746, and Ser778. Positions 828–873 are disordered; it reads VLPSSSSSRGSLDSSRSEKDRSLERERGIGLSAYHPTTENAGTSSK. Residues 831-841 show a composition bias toward low complexity; sequence SSSSSRGSLDS. A compositionally biased stretch (basic and acidic residues) spans 842 to 855; it reads SRSEKDRSLERERG. Over residues 862–873 the composition is skewed to polar residues; the sequence is HPTTENAGTSSK. The residue at position 906 (Ser906) is a Phosphoserine. Disordered regions lie at residues 921-942 and 956-986; these read RRSS…ENSN and RSSN…SYSE. Residues 927 to 942 are compositionally biased toward polar residues; the sequence is HTHSNTYNFTKSENSN. Over residues 959-969 the composition is skewed to low complexity; the sequence is NDSLNSVTSSD. Ser985, Ser1036, and Ser1040 each carry phosphoserine. An interaction with catenins region spans residues 1018-1168; that stretch reads ELDTPINYSL…TNYSIKYNEE (151 aa). 4 disordered regions span residues 1058-1079, 1092-1168, 1189-1247, and 1307-1375; these read IKQN…YSEN, GQQE…YNEE, SQKP…GTTC, and ENDV…PEHY. Composition is skewed to polar residues over residues 1066 to 1078 and 1103 to 1128; these read ARSQ…VYSE and RGTS…QSLC. Residues 1189-1204 show a composition bias toward low complexity; sequence SQKPSFSFSKNSSAQS. Residues 1211–1245 are compositionally biased toward polar residues; the sequence is SPSSENTAVPPSNAKRQNQLRPSSAQRNGQTQKGT. Low complexity predominate over residues 1354–1365; it reads SSGAKSPSKSGA. A phosphoserine mark is found at Ser1359, Ser1370, Ser1384, Ser1391, and Ser1394. 5 disordered regions span residues 1400-1474, 1525-1568, 1587-1606, 1746-2010, and 2042-2069; these read IASS…VNAA, PPVQ…SDDD, RKAK…VARK, DQVQ…APKS, and ISSA…KVGG. Thr1437 carries the phosphothreonine modification. Residues 1447–1465 show a composition bias toward basic and acidic residues; it reads AKREVPKSKVPAAEKRESG. Acidic residues predominate over residues 1532-1546; sequence NGNETESEQPEESNE. A compositionally biased stretch (basic and acidic residues) spans 1547–1562; sequence NQDKEVEKPDSEKDLL. Ser1565 is subject to Phosphoserine. Residues 1747 to 1762 show a composition bias toward polar residues; it reads QVQQASSTSSGANKNQ. The residue at position 1772 (Ser1772) is a Phosphoserine. Residues 1783-1792 are compositionally biased toward basic and acidic residues; the sequence is YRTRVRKNTD. 3 positions are modified to phosphoserine: Ser1859, Ser1861, and Ser1862. The segment at 1864 to 1891 is highly charged; the sequence is DFDDDDVDLSREKAELRKGKESKDSEAK. Positions 1871 to 1894 are enriched in basic and acidic residues; the sequence is DLSREKAELRKGKESKDSEAKVTC. Residues 1900 to 1911 are compositionally biased toward low complexity; that stretch reads SSQQAASKSQAS. A compositionally biased stretch (polar residues) spans 1927-1936; sequence KQPTFPQSSK. Basic and acidic residues predominate over residues 1937 to 1949; sequence DGPDRGAATDEKL. Ser1969 and Ser1971 each carry phosphoserine. The segment covering 1979-1990 has biased composition (basic and acidic residues); it reads NNKESEPIKEAE. Residues 2034–2058 form an interaction with AXIN1 region; sequence EDDLLQECISSAMPKKKRPSRLKSE. 6 positions are modified to phosphoserine: Ser2087, Ser2092, Ser2125, Ser2129, Ser2130, and Ser2132. Disordered stretches follow at residues 2146–2190, 2202–2652, and 2664–2845; these read SPFH…GIKG, KIRS…PPVS, and CPIN…VTSV. At Thr2151 the chain carries Phosphothreonine. The interval 2167 to 2674 is basic region; sequence ILKPGEKSTL…PINNPRSGRS (508 aa). Over residues 2169–2187 the composition is skewed to basic and acidic residues; it reads KPGEKSTLEAKKIESENKG. Composition is skewed to polar residues over residues 2203 to 2223 and 2257 to 2272; these read IRSN…NMPS and ASKS…TSPR. Residues Ser2260, Ser2270, and Ser2283 each carry the phosphoserine modification. Residues 2290 to 2311 show a composition bias toward low complexity; that stretch reads SQISGSNKGSSRSGSRDSTPSR. Polar residues predominate over residues 2312–2331; the sequence is PTQQPLSRPMQSPGRNSISP. Residues 2348 to 2369 show a composition bias toward low complexity; that stretch reads TSSPSTASTKSSGSGKMSYTSP. A compositionally biased stretch (polar residues) spans 2370–2411; sequence GRQLSQQNLTKQASLSKNASSIPRSESASKGLNQMSNGNGSN. Composition is skewed to low complexity over residues 2417 to 2429 and 2459 to 2477; these read SRMS…GSES and SASF…PTRS. Phosphoserine is present on residues Ser2473 and Ser2535. The segment at 2475–2845 is interaction with DLG1; that stretch reads TRSQAQTPVL…HSGSYLVTSV (371 aa). Basic and acidic residues predominate over residues 2518-2535; it reads NDGRPTKRHDIARSHSES. Positions 2555 to 2568 are enriched in polar residues; that stretch reads SSSLPRVSTWRRTG. At Ser2569 the chain carries Phosphoserine. Residues 2569–2579 are compositionally biased toward low complexity; sequence SSSSILSASSE. The span at 2580-2592 shows a compositional bias: basic and acidic residues; sequence SSEKAKSEDERHV. Low complexity predominate over residues 2626-2638; the sequence is ASQSASSGAASGA. Over residues 2668–2679 the composition is skewed to polar residues; it reads NPRSGRSPTGNT. Residues Ser2671 and Ser2674 each carry the phosphoserine modification. The interaction with MAPRE1 stretch occupies residues 2674-2845; it reads SPTGNTPPVI…HSGSYLVTSV (172 aa). At Thr2679 the chain carries Phosphothreonine. Residues 2684 to 2694 are compositionally biased toward low complexity; sequence DSVSEKGSSSI. Over residues 2695 to 2705 the composition is skewed to basic and acidic residues; that stretch reads KDSKDSKDTHG. Residues 2706-2716 are compositionally biased toward polar residues; sequence KQSVGSGSPVQ. Phosphoserine occurs at positions 2713 and 2726. The span at 2765 to 2776 shows a compositional bias: low complexity; that stretch reads SSSSSSKHSSPS. Residues 2786 to 2814 show a composition bias toward polar residues; sequence FNYNPSPRKSSADSTSARPSQIPTPVSTN. The residue at position 2791 (Ser2791) is a Phosphoserine. The Microtubule tip localization signal motif lies at 2805-2808; it reads SQIP. The PDZ-binding motif lies at 2843–2845; sequence TSV.

This sequence belongs to the adenomatous polyposis coli (APC) family. Forms homooligomers. Found in a complex consisting of ARHGEF4, APC and CTNNB1. Found in a complex composed of MACF1, APC, AXIN1, CTNNB1 and GSK3B. The complex composed, at least, of APC, CTNNB1 and GSK3B interacts with JPT1; the interaction requires the inactive form of GSK3B (phosphorylated at 'Ser-9'). Interacts with APC2. Interacts with DLG1 (via PDZ domains) and DLG3 (via PDZ domains). Interacts with alpha- and beta-catenins. Interacts with AXIN1 (via RGS domain). Interacts with ARHGEF4 (via N-terminus). Interacts (via C-terminal residues 2674-2843) with MAPRE1 (via C-terminal residues 206-211); the interaction inhibits association with and bundling of F-actin. Interacts with MAPRE2 and MAPRE3 (via C-terminus). Interacts with DIAPH1; DIAPH1 acts as a scaffold protein for MAPRE1 and APC to stabilize microtubules and promote cell migration. Interacts with DIAPH2. Interacts with SCRIB; may mediate targeting to adherens junctions of epithelial cells. Interacts with SPATA13 (via N-terminus and SH3 domain). Interacts with ASAP1 (via SH3 domain). Interacts (at the cell membrane) with AMER1 and AMER2 (via ARM repeats). Interacts with KHDRBS1. Interacts with actin; binds both to F-actin and actin filament bundles. Phosphorylated; phosphorylation enhances the F-actin bundling activity. Phosphorylated by GSK3B. In terms of processing, ubiquitinated, leading to its degradation by the proteasome. Ubiquitination is facilitated by Axin. Deubiquitinated by ZRANB1/TRABID. Expressed in liver, spleen, kidney, heart, lung, brain, stomach, intestine, testis and ovary.

Its subcellular location is the cell junction. It is found in the adherens junction. The protein localises to the cytoplasm. It localises to the cytoskeleton. The protein resides in the cell projection. Its subcellular location is the lamellipodium. It is found in the ruffle membrane. The protein localises to the cell membrane. Functionally, tumor suppressor. Promotes rapid degradation of CTNNB1 and participates in Wnt signaling as a negative regulator. APC activity is correlated with its phosphorylation state. Activates the GEF activity of SPATA13 and ARHGEF4. Plays a role in hepatocyte growth factor (HGF)-induced cell migration. Required for MMP9 up-regulation via the JNK signaling pathway in colorectal tumor cells. Associates with both microtubules and actin filaments, components of the cytoskeleton. Plays a role in mediating the organization of F-actin into ordered bundles. Functions downstream of Rho GTPases and DIAPH1 to selectively stabilize microtubules. Acts as a mediator of ERBB2-dependent stabilization of microtubules at the cell cortex. It is required for the localization of MACF1 to the cell membrane and this localization of MACF1 is critical for its function in microtubule stabilization. The protein is Adenomatous polyposis coli protein (Apc) of Mus musculus (Mouse).